Reading from the N-terminus, the 305-residue chain is UDP-3-O-acyl-N-acetylglucosamine deacetylase (305 aa).

3 residues coordinate Zn(2+): H79, H238, and D242. H265 (proton donor) is an active-site residue.

Belongs to the LpxC family. The cofactor is Zn(2+).

It catalyses the reaction a UDP-3-O-[(3R)-3-hydroxyacyl]-N-acetyl-alpha-D-glucosamine + H2O = a UDP-3-O-[(3R)-3-hydroxyacyl]-alpha-D-glucosamine + acetate. It participates in glycolipid biosynthesis; lipid IV(A) biosynthesis; lipid IV(A) from (3R)-3-hydroxytetradecanoyl-[acyl-carrier-protein] and UDP-N-acetyl-alpha-D-glucosamine: step 2/6. Functionally, catalyzes the hydrolysis of UDP-3-O-myristoyl-N-acetylglucosamine to form UDP-3-O-myristoylglucosamine and acetate, the committed step in lipid A biosynthesis. The polypeptide is UDP-3-O-acyl-N-acetylglucosamine deacetylase (Klebsiella pneumoniae (strain 342)).